Reading from the N-terminus, the 594-residue chain is Aspartate--tRNA ligase (594 aa).

Glutamate 171 is a binding site for L-aspartate. An aspartate region spans residues 195–198 (QLFK). An L-aspartate-binding site is contributed by arginine 217. Residues 217 to 219 (RDE) and glutamine 226 contribute to the ATP site. Histidine 449 is a binding site for L-aspartate. Position 483 (glutamate 483) interacts with ATP. L-aspartate is bound at residue arginine 490. Position 535–538 (535–538 (GLDR)) interacts with ATP.

Belongs to the class-II aminoacyl-tRNA synthetase family. Type 1 subfamily. Homodimer.

The protein localises to the cytoplasm. It catalyses the reaction tRNA(Asp) + L-aspartate + ATP = L-aspartyl-tRNA(Asp) + AMP + diphosphate. In terms of biological role, catalyzes the attachment of L-aspartate to tRNA(Asp) in a two-step reaction: L-aspartate is first activated by ATP to form Asp-AMP and then transferred to the acceptor end of tRNA(Asp). This Proteus mirabilis (strain HI4320) protein is Aspartate--tRNA ligase.